Consider the following 340-residue polypeptide: Ferrochelatase (340 aa).

Residues histidine 189 and glutamate 292 each coordinate Fe cation.

Belongs to the ferrochelatase family.

The protein resides in the cytoplasm. The enzyme catalyses heme b + 2 H(+) = protoporphyrin IX + Fe(2+). It participates in porphyrin-containing compound metabolism; protoheme biosynthesis; protoheme from protoporphyrin-IX: step 1/1. In terms of biological role, catalyzes the ferrous insertion into protoporphyrin IX. This is Ferrochelatase from Pseudomonas syringae pv. tomato (strain ATCC BAA-871 / DC3000).